Consider the following 674-residue polypeptide: NADH-ubiquinone oxidoreductase chain 5 (674 aa).

17 helical membrane-spanning segments follow: residues 27 to 47 (GAHIITCSCLITSAILAIVAF), 81 to 101 (LTVSMLLPVLVVSSLVHIFSV), 113 to 133 (FFAYLSMFTFFMLVLVTGDNY), 135 to 155 (IMFVGWEGIGISSYLLINFWF), 173 to 193 (VGDMFLSIGFFAIFFVFGNLD), 200 to 220 (IAPFINETIITIIGLLLLLAA), 242 to 262 (TPVSALIHAATLVTAGVYLLL), 275 to 295 (LIVITWVGALTAFFAASTGLL), 301 to 323 (RVIAYSTCSQMGYLFMACGLSQY), 325 to 345 (VALFHLVNHAFFKALLFLAAG), 363 to 383 (LIGFLPFTYTAILIGSLSLIA), 410 to 430 (VAYWLGTLSACLTAFYSLRLI), 453 to 473 (TIVMIPLIILSLLAIFFGYVA), 514 to 534 (AIGTLLGAGLALYLYHMLPVF), 556 to 576 (YVDVIYNHYIIYGGLQLGYVI), 616 to 636 (ALYLAIALVTLIMILLSPVLL), and 639 to 659 (ALINAPLILVLLVAMVCIPYI).

The protein belongs to the complex I subunit 5 family.

Its subcellular location is the mitochondrion inner membrane. The enzyme catalyses a ubiquinone + NADH + 5 H(+)(in) = a ubiquinol + NAD(+) + 4 H(+)(out). Functionally, core subunit of the mitochondrial membrane respiratory chain NADH dehydrogenase (Complex I) that is believed to belong to the minimal assembly required for catalysis. Complex I functions in the transfer of electrons from NADH to the respiratory chain. The immediate electron acceptor for the enzyme is believed to be ubiquinone. The polypeptide is NADH-ubiquinone oxidoreductase chain 5 (ND5) (Mycosarcoma maydis (Corn smut fungus)).